We begin with the raw amino-acid sequence, 348 residues long: 2-heptyl-4(1H)-quinolone synthase subunit PqsC (348 aa).

The active-site Acyl-thioester intermediate is the C129. H269 is an active-site residue.

The protein belongs to the thiolase-like superfamily. FabH family. As to quaternary structure, forms a tight complex with PqsB.

The protein localises to the cytoplasm. The enzyme catalyses (2-aminobenzoyl)acetate + octanoyl-CoA + H(+) = 2-heptyl-4(1H)-quinolone + CO2 + CoA + H2O. Folding of PqsC and binding of octanoate are promoted by PqsB. Binding of the octanoyl group probably increases the binding affinity of the complex for 2-ABA. Activity of the complex is inhibited by 2-aminoacetophenone (2-AA). Its function is as follows. Required for the biosynthesis of the quorum-sensing signaling molecules 2-heptyl-4(1H)-quinolone (HHQ) and 2-heptyl-3-hydroxy-4(1H)-quinolone (Pseudomonas quinolone signal or PQS), which are important for biofilm formation and virulence. The PqsC/PqsB complex catalyzes the condensation of 2-aminobenzoylacetate (2-ABA) and octanoyl-CoA to form HHQ. First, PqsC acquires an octanoyl group from octanoyl-CoA and forms an octanoyl-PqsC intermediate. Then, together with PqsB, it catalyzes the coupling of 2-ABA with the octanoate group, leading to decarboxylation and dehydration, and resulting in closure of the quinoline ring. This chain is 2-heptyl-4(1H)-quinolone synthase subunit PqsC, found in Pseudomonas aeruginosa (strain ATCC 15692 / DSM 22644 / CIP 104116 / JCM 14847 / LMG 12228 / 1C / PRS 101 / PAO1).